The sequence spans 168 residues: uncharacterized protein (168 aa).

Helical transmembrane passes span 15 to 33 (YLTV…LAVL), 41 to 57 (LSLT…ASSL), 73 to 93 (WIGL…GALL), 108 to 128 (VPLL…WVLN), and 129 to 149 (NLIA…VLAI).

The protein resides in the cell membrane. This is an uncharacterized protein from Haemophilus influenzae (strain ATCC 51907 / DSM 11121 / KW20 / Rd).